Reading from the N-terminus, the 505-residue chain is uncharacterized protein (505 aa).

The next 14 helical transmembrane spans lie at 9 to 29, 49 to 69, 86 to 106, 122 to 142, 156 to 176, 181 to 201, 235 to 255, 261 to 281, 310 to 330, 341 to 361, 371 to 391, 395 to 415, 435 to 455, and 464 to 484; these read ANLT…PFIV, YFSV…SVAA, AASV…AFFI, LSIL…GFGA, IQAV…ACFA, QIQL…FYFF, IGVL…LGAS, AAII…ASLF, LLLA…LTIW, LLFI…LFYI, PAIV…TLSG, LGLY…NAIF, IIGP…IQFI, and LIAT…MLVC.

It localises to the cell membrane. Functionally, may be involved in the production of the exopolysaccharide (EPS) component of the extracellular matrix during biofilm formation. EPS is responsible for the adhesion of chains of cells into bundles. This is an uncharacterized protein from Bacillus subtilis (strain 168).